The following is a 428-amino-acid chain: Serine--tRNA ligase (428 aa).

L-serine is bound at residue Thr231–Glu233. Arg262–Glu264 lines the ATP pocket. Glu285 contacts L-serine. Glu349–Ser352 contributes to the ATP binding site. Ser385 contributes to the L-serine binding site.

This sequence belongs to the class-II aminoacyl-tRNA synthetase family. Type-1 seryl-tRNA synthetase subfamily. In terms of assembly, homodimer. The tRNA molecule binds across the dimer.

It is found in the cytoplasm. The enzyme catalyses tRNA(Ser) + L-serine + ATP = L-seryl-tRNA(Ser) + AMP + diphosphate + H(+). The catalysed reaction is tRNA(Sec) + L-serine + ATP = L-seryl-tRNA(Sec) + AMP + diphosphate + H(+). It participates in aminoacyl-tRNA biosynthesis; selenocysteinyl-tRNA(Sec) biosynthesis; L-seryl-tRNA(Sec) from L-serine and tRNA(Sec): step 1/1. Catalyzes the attachment of serine to tRNA(Ser). Is also able to aminoacylate tRNA(Sec) with serine, to form the misacylated tRNA L-seryl-tRNA(Sec), which will be further converted into selenocysteinyl-tRNA(Sec). In Staphylococcus epidermidis (strain ATCC 35984 / DSM 28319 / BCRC 17069 / CCUG 31568 / BM 3577 / RP62A), this protein is Serine--tRNA ligase.